We begin with the raw amino-acid sequence, 574 residues long: Intraflagellar transport protein 56 homolog (574 aa).

3 TPR repeats span residues 20-52, 57-90, and 151-184; these read AQKM…GNLD, DSLQ…DDAP, and LEDR…SPNL.

The protein belongs to the IFT56 family. Component of the IFT complex B composed of at least che-2, che-13, dyf-1, dyf-3, dyf-6, dyf-11, dyf-13, ift-20, ift-74, ift-81, ifta-2, osm-1, osm-5 and osm-6.

Its subcellular location is the cell projection. It is found in the cilium. Functionally, component of the intraflagellar transport (IFT) complex B required for transport of proteins in the motile cilium. May be required for ciliary entrance and transport of specific ciliary cargo proteins such as che-3 which are related to motility. The chain is Intraflagellar transport protein 56 homolog from Caenorhabditis elegans.